A 336-amino-acid polypeptide reads, in one-letter code: Alpha-glucoside transport system permease protein AglF (336 aa).

A run of 8 helical transmembrane segments spans residues 4-24, 55-75, 113-133, 146-166, 176-196, 202-222, 258-278, and 304-324; these read LIAA…YFWS, PWLF…YPVV, FLWL…IAAL, LIFM…KFIY, IGLL…WITL, FFLM…ILSA, IAVV…IVLA, and FGRG…IMIW. Positions 109–325 constitute an ABC transmembrane type-1 domain; it reads IFNNFLWLLV…ILVVPIMIWN (217 aa).

It belongs to the binding-protein-dependent transport system permease family. MalFG subfamily.

It localises to the cell inner membrane. Part of the binding-protein-dependent transport system for alpha-glucosides such as sucrose, maltose and trehalose. Probably responsible for the translocation of the substrate across the membrane. In Rhizobium meliloti (strain 1021) (Ensifer meliloti), this protein is Alpha-glucoside transport system permease protein AglF (aglF).